Here is a 42-residue protein sequence, read N- to C-terminus: Photosystem I reaction center subunit IX (42 aa).

The chain crosses the membrane as a helical span at residues 7–27; it reads YLSTAPVLATLWFGFLAGLLI.

Belongs to the PsaJ family.

The protein localises to the plastid. It localises to the chloroplast thylakoid membrane. In terms of biological role, may help in the organization of the PsaE and PsaF subunits. The protein is Photosystem I reaction center subunit IX of Marchantia polymorpha (Common liverwort).